The following is a 472-amino-acid chain: Methanethiol oxidase (472 aa).

This sequence belongs to the selenium-binding protein family.

The protein resides in the nucleus. Its subcellular location is the cytoplasm. The protein localises to the cytosol. It is found in the membrane. The catalysed reaction is methanethiol + O2 + H2O = hydrogen sulfide + formaldehyde + H2O2 + H(+). It functions in the pathway organosulfur degradation. Its function is as follows. Catalyzes the oxidation of methanethiol, an organosulfur compound known to be produced in substantial amounts by gut bacteria. Selenium-binding protein which may be involved in the sensing of reactive xenobiotics in the cytoplasm. May be involved in intra-Golgi protein transport. In Xenopus tropicalis (Western clawed frog), this protein is Methanethiol oxidase (selenbp1).